Reading from the N-terminus, the 638-residue chain is Epithelial sodium channel subunit beta (638 aa).

Topologically, residues 1–50 (MPVKKYLLKCLHRLQKGPGYTYKELLVWYCNNTNTHGPKRIICEGPKKKA) are cytoplasmic. The helical transmembrane segment at 51–71 (MWFLLTLLFACLVCWQWGVFI) threads the bilayer. The Extracellular portion of the chain corresponds to 72–530 (QTYLSWEVSV…GGQFGFWMGG (459 aa)). Intrachain disulfides connect C98-C270, C182-C187, C194-C201, C247-C254, C359-C446, C384-C442, C388-C438, C397-C424, and C399-C413. N-linked (GlcNAc...) asparagine glycosylation is found at N135 and N141. A helical transmembrane segment spans residues 531 to 551 (SVLCLIEFGEIIIDFIWITVI). At 552-638 (KLVASCKGLR…MESDSEVEAI (87 aa)) the chain is on the cytoplasmic side. The segment at 598-620 (NAEVYPDQQTLPIPGTPPPNYDS) is disordered. The short motif at 614–618 (PPPNY) is the PY motif; recruits WW domain-containing proteins and is thereby required for ubiquitination and inhibition of the channel by NEDD4 and NEDD4L element. Phosphoserine is present on residues S631 and S633.

The protein belongs to the amiloride-sensitive sodium channel (TC 1.A.6) family. SCNN1B subfamily. Component of the heterotrimeric epithelial sodium channel (ENaC) composed of an alpha/SCNN1A, a beta/SCNN1B and a gamma/SCNN1G subunit. Interacts with WWP1 (via WW domains). Interacts with WWP2 (via WW domains). Interacts with the full-length immature form of PCSK9 (pro-PCSK9). Interacts (N-glycosylated) with BPIFA1; the interaction is direct and inhibits the proteolytic processing of SCNN1A and SCNN1G and the activation of ENaC. In terms of processing, ubiquitinated. Can be ubiquitinated at multiple sites and undergo monoubiquitination and polyubiquitination. Ubiquitination by NEDD4 or NEDD4L inhibits the ENaC channel through endocytosis, intracellular retention and degradation of its individual subunits. However, some studies could not confirm the ubiquitination of this subunit of the ENaC. Post-translationally, N-glycosylated. N-glycosylation is required for interaction with BPIFA1. Phosphorylated on serine and threonine residues. Aldosterone and insulin increase the basal level of phosphorylation. As to expression, expressed in lung and epididymis. In the caput region of the epididymis, expressed at the luminal and basolateral surfaces of the ducts and in the smooth muscle coat. In the caudal region of the epididymis, expressed along the luminal border but not continuously, in the smooth muscle coat, in the interstitial muscle tissue and in sperm in the caudal lumen.

It is found in the apical cell membrane. It localises to the cytoplasmic vesicle membrane. It carries out the reaction Na(+)(in) = Na(+)(out). With respect to regulation, originally identified and characterized by its inhibition by the diuretic drug amiloride. In terms of biological role, this is one of the three pore-forming subunits of the heterotrimeric epithelial sodium channel (ENaC), a critical regulator of sodium balance and fluid homeostasis. ENaC operates in epithelial tissues, where it mediates the electrodiffusion of sodium ions from extracellular fluid through the apical membrane of cells, with water following osmotically. It plays a key role in maintaining sodium homeostasis through electrogenic sodium reabsorption in the kidneys. This subunit is not essential for ENaC function in airway surface liquid homeostasis and proper mucus clearance. The protein is Epithelial sodium channel subunit beta of Rattus norvegicus (Rat).